The following is a 249-amino-acid chain: DNA polymerase sliding clamp 1 (249 aa).

The protein belongs to the PCNA family. Homotrimer. The subunits circularize to form a toroid; DNA passes through its center. Replication factor C (RFC) is required to load the toroid on the DNA. Interacts with TIP.

With respect to regulation, inhibited by interaction with the PCNA inhibitor TIP. Sliding clamp subunit that acts as a moving platform for DNA processing. Responsible for tethering the catalytic subunit of DNA polymerase and other proteins to DNA during high-speed replication. In Thermococcus kodakarensis (strain ATCC BAA-918 / JCM 12380 / KOD1) (Pyrococcus kodakaraensis (strain KOD1)), this protein is DNA polymerase sliding clamp 1.